We begin with the raw amino-acid sequence, 241 residues long: 3-oxoacyl-[acyl-carrier-protein] reductase FabG (241 aa).

NADP(+) contacts are provided by residues Gly-13 to Gly-16, Ser-38, Glu-57 to Val-58, and Asn-83. Substrate is bound at residue Ser-135. Tyr-148 serves as the catalytic Proton acceptor. Residues Tyr-148–Lys-152 and Ile-181 contribute to the NADP(+) site.

Belongs to the short-chain dehydrogenases/reductases (SDR) family. Homotetramer.

It catalyses the reaction a (3R)-hydroxyacyl-[ACP] + NADP(+) = a 3-oxoacyl-[ACP] + NADPH + H(+). Its pathway is lipid metabolism; fatty acid biosynthesis. In terms of biological role, catalyzes the NADPH-dependent reduction of beta-ketoacyl-ACP substrates to beta-hydroxyacyl-ACP products, the first reductive step in the elongation cycle of fatty acid biosynthesis. The protein is 3-oxoacyl-[acyl-carrier-protein] reductase FabG (fabG) of Rickettsia typhi (strain ATCC VR-144 / Wilmington).